A 229-amino-acid polypeptide reads, in one-letter code: Large ribosomal subunit protein uL1 (229 aa).

The protein belongs to the universal ribosomal protein uL1 family. As to quaternary structure, part of the 50S ribosomal subunit.

Functionally, binds directly to 23S rRNA. The L1 stalk is quite mobile in the ribosome, and is involved in E site tRNA release. Protein L1 is also a translational repressor protein, it controls the translation of the L11 operon by binding to its mRNA. The protein is Large ribosomal subunit protein uL1 of Mycoplasmopsis pulmonis (strain UAB CTIP) (Mycoplasma pulmonis).